Reading from the N-terminus, the 347-residue chain is N-acetyl-gamma-glutamyl-phosphate reductase (347 aa).

Residue Cys152 is part of the active site.

This sequence belongs to the NAGSA dehydrogenase family. Type 1 subfamily.

The protein localises to the cytoplasm. The catalysed reaction is N-acetyl-L-glutamate 5-semialdehyde + phosphate + NADP(+) = N-acetyl-L-glutamyl 5-phosphate + NADPH + H(+). The protein operates within amino-acid biosynthesis; L-arginine biosynthesis; N(2)-acetyl-L-ornithine from L-glutamate: step 3/4. Catalyzes the NADPH-dependent reduction of N-acetyl-5-glutamyl phosphate to yield N-acetyl-L-glutamate 5-semialdehyde. In Ehrlichia ruminantium (strain Gardel), this protein is N-acetyl-gamma-glutamyl-phosphate reductase.